Consider the following 212-residue polypeptide: Ribosomal RNA large subunit methyltransferase E (212 aa).

S-adenosyl-L-methionine is bound by residues glycine 57, tryptophan 59, aspartate 77, aspartate 93, and aspartate 122. Lysine 162 serves as the catalytic Proton acceptor.

Belongs to the class I-like SAM-binding methyltransferase superfamily. RNA methyltransferase RlmE family.

Its subcellular location is the cytoplasm. It carries out the reaction uridine(2552) in 23S rRNA + S-adenosyl-L-methionine = 2'-O-methyluridine(2552) in 23S rRNA + S-adenosyl-L-homocysteine + H(+). In terms of biological role, specifically methylates the uridine in position 2552 of 23S rRNA at the 2'-O position of the ribose in the fully assembled 50S ribosomal subunit. This chain is Ribosomal RNA large subunit methyltransferase E, found in Coxiella burnetii (strain RSA 493 / Nine Mile phase I).